The primary structure comprises 108 residues: MGVEVQRISPGDGKNFPKPGDTVSIHYTGTLADGSKFDSSRDRPGTFVTQIGVGRVIKGWDEGVLQLSVGEKAKLICTPDYAYGARGFPPVIPPNATLTFEVELLKIN.

The disordered stretch occupies residues 1–20 (MGVEVQRISPGDGKNFPKPG). Residues 20–108 (GDTVSIHYTG…TFEVELLKIN (89 aa)) form the PPIase FKBP-type domain.

It belongs to the FKBP-type PPIase family. FKBP1 subfamily.

Its subcellular location is the cytoplasm. The catalysed reaction is [protein]-peptidylproline (omega=180) = [protein]-peptidylproline (omega=0). Inhibited by both FK506 and rapamycin. PPIases accelerate the folding of proteins. It catalyzes the cis-trans isomerization of proline imidic peptide bonds in oligopeptides. In Emericella nidulans (strain FGSC A4 / ATCC 38163 / CBS 112.46 / NRRL 194 / M139) (Aspergillus nidulans), this protein is FK506-binding protein 1A (fprA).